A 540-amino-acid polypeptide reads, in one-letter code: Glucose-6-phosphate isomerase (540 aa).

The Proton donor role is filled by Glu350. Active-site residues include His381 and Lys503.

Belongs to the GPI family.

The protein resides in the cytoplasm. The enzyme catalyses alpha-D-glucose 6-phosphate = beta-D-fructose 6-phosphate. It functions in the pathway carbohydrate biosynthesis; gluconeogenesis. The protein operates within carbohydrate degradation; glycolysis; D-glyceraldehyde 3-phosphate and glycerone phosphate from D-glucose: step 2/4. Catalyzes the reversible isomerization of glucose-6-phosphate to fructose-6-phosphate. This chain is Glucose-6-phosphate isomerase, found in Burkholderia lata (strain ATCC 17760 / DSM 23089 / LMG 22485 / NCIMB 9086 / R18194 / 383).